The primary structure comprises 470 residues: Histone deacetylase HOS1 (470 aa).

The tract at residues 47–392 is histone deacetylase; it reads LTFPYARKDD…YTYLTWCVTK (346 aa). At Ser110 the chain carries Phosphoserine. Residue His211 is part of the active site.

The protein belongs to the histone deacetylase family. HD type 1 subfamily.

It is found in the nucleus. It carries out the reaction N(6)-acetyl-L-lysyl-[histone] + H2O = L-lysyl-[histone] + acetate. Its function is as follows. Responsible for the deacetylation of lysine residues on the N-terminal part of the core histones (H2A, H2B, H3 and H4). Histone deacetylation plays an important role in transcriptional regulation, cell cycle progression and developmental events. Histone deacetylases act via the formation of large multiprotein complexes. The chain is Histone deacetylase HOS1 (HOS1) from Saccharomyces cerevisiae (strain ATCC 204508 / S288c) (Baker's yeast).